The following is a 153-amino-acid chain: Myosin regulatory light chain LC-2, mantle muscle (153 aa).

The residue at position 1 (Ala-1) is a Blocked amino end (Ala). EF-hand domains follow at residues 13–48 (RQMQ…LGRV) and 82–117 (DPED…MGDN). 4 residues coordinate Ca(2+): Asp-26, Asp-28, Asp-30, and Asp-37.

In molluscan muscle, calcium regulation is associated with myosin rather than with actin. Muscle myosin contains two types of light chains: the catalytic light chain, essential for ATPase activity, and the regulatory light chain, a calcium-binding protein responsible for Ca(2+) dependent binding and Ca(2+) dependent Mg-ATPase activity. The chain is Myosin regulatory light chain LC-2, mantle muscle from Todarodes pacificus (Japanese flying squid).